The chain runs to 116 residues: Protein Rev (116 aa).

2 positions are modified to phosphoserine; by host CK2: S5 and S8. Residues 18–26 (LIKFLYQSN) are homomultimerization. The tract at residues 25 to 49 (SNPPPSLEGTRQARRNRRRRWRERQ) is disordered. The Nuclear localization signal and RNA-binding (RRE) signature appears at 34–50 (TRQARRNRRRRWRERQR). A compositionally biased stretch (basic residues) spans 36–47 (QARRNRRRRWRE). The Nuclear export signal and binding to XPO1 signature appears at 73–84 (LPLPPLEKLTLD). Residues S92 and S99 each carry the phosphoserine; by host modification. The interval 92–116 (SGTQGVGSPQILVESPAILEPGTKE) is disordered.

This sequence belongs to the HIV-1 REV protein family. Homomultimer; when bound to the RRE. Multimeric assembly is essential for activity and may involve XPO1. Binds to human KPNB1, XPO1, TNPO1, RANBP5 and IPO7. Interacts with the viral Integrase. Interacts with human KHDRBS1. Interacts with human NAP1; this interaction decreases Rev multimerization and stimulates its activity. Interacts with human DEAD-box helicases DDX3 and DDX24; these interactions may serve for viral RNA export to the cytoplasm and packaging, respectively. Interacts with human PSIP1; this interaction may inhibit HIV-1 DNA integration by promoting dissociation of the Integrase-LEDGF/p75 complex. Post-translationally, asymmetrically arginine dimethylated at one site by host PRMT6. Methylation impairs the RNA-binding activity and export of viral RNA from the nucleus to the cytoplasm. Phosphorylated by protein kinase CK2. Presence of, and maybe binding to the N-terminus of the regulatory beta subunit of CK2 is necessary for CK2-mediated Rev's phosphorylation.

The protein localises to the host nucleus. It localises to the host nucleolus. The protein resides in the host cytoplasm. In terms of biological role, escorts unspliced or incompletely spliced viral pre-mRNAs (late transcripts) out of the nucleus of infected cells. These pre-mRNAs carry a recognition sequence called Rev responsive element (RRE) located in the env gene, that is not present in fully spliced viral mRNAs (early transcripts). This function is essential since most viral proteins are translated from unspliced or partially spliced pre-mRNAs which cannot exit the nucleus by the pathway used by fully processed cellular mRNAs. Rev itself is translated from a fully spliced mRNA that readily exits the nucleus. Rev's nuclear localization signal (NLS) binds directly to KPNB1/Importin beta-1 without previous binding to KPNA1/Importin alpha-1. KPNB1 binds to the GDP bound form of RAN (Ran-GDP) and targets Rev to the nucleus. In the nucleus, the conversion from Ran-GDP to Ran-GTP dissociates Rev from KPNB1 and allows Rev's binding to the RRE in viral pre-mRNAs. Rev multimerization on the RRE via cooperative assembly exposes its nuclear export signal (NES) to the surface. Rev can then form a complex with XPO1/CRM1 and Ran-GTP, leading to nuclear export of the complex. Conversion from Ran-GTP to Ran-GDP mediates dissociation of the Rev/RRE/XPO1/RAN complex, so that Rev can return to the nucleus for a subsequent round of export. Beside KPNB1, also seems to interact with TNPO1/Transportin-1, RANBP5/IPO5 and IPO7/RANBP7 for nuclear import. The nucleoporin-like HRB/RIP is an essential cofactor that probably indirectly interacts with Rev to release HIV RNAs from the perinuclear region to the cytoplasm. The protein is Protein Rev of Human immunodeficiency virus type 1 group M subtype B (strain 89.6) (HIV-1).